Here is a 140-residue protein sequence, read N- to C-terminus: Nucleoside diphosphate kinase (140 aa).

Residues K11, F59, R87, T93, R104, and N114 each coordinate ATP. H117 (pros-phosphohistidine intermediate) is an active-site residue.

It belongs to the NDK family. Homotetramer. The cofactor is Mg(2+).

The protein resides in the cytoplasm. The enzyme catalyses a 2'-deoxyribonucleoside 5'-diphosphate + ATP = a 2'-deoxyribonucleoside 5'-triphosphate + ADP. It carries out the reaction a ribonucleoside 5'-diphosphate + ATP = a ribonucleoside 5'-triphosphate + ADP. In terms of biological role, major role in the synthesis of nucleoside triphosphates other than ATP. The ATP gamma phosphate is transferred to the NDP beta phosphate via a ping-pong mechanism, using a phosphorylated active-site intermediate. This is Nucleoside diphosphate kinase from Bradyrhizobium sp. (strain BTAi1 / ATCC BAA-1182).